Here is a 450-residue protein sequence, read N- to C-terminus: UDP-N-acetylmuramoylalanine--D-glutamate ligase (450 aa).

119 to 125 serves as a coordination point for ATP; the sequence is GSNGKTT.

The protein belongs to the MurCDEF family.

Its subcellular location is the cytoplasm. It catalyses the reaction UDP-N-acetyl-alpha-D-muramoyl-L-alanine + D-glutamate + ATP = UDP-N-acetyl-alpha-D-muramoyl-L-alanyl-D-glutamate + ADP + phosphate + H(+). It functions in the pathway cell wall biogenesis; peptidoglycan biosynthesis. Its function is as follows. Cell wall formation. Catalyzes the addition of glutamate to the nucleotide precursor UDP-N-acetylmuramoyl-L-alanine (UMA). The sequence is that of UDP-N-acetylmuramoylalanine--D-glutamate ligase from Bacillus cereus (strain B4264).